The following is a 90-amino-acid chain: Cell division topological specificity factor (90 aa).

It belongs to the MinE family.

Prevents the cell division inhibition by proteins MinC and MinD at internal division sites while permitting inhibition at polar sites. This ensures cell division at the proper site by restricting the formation of a division septum at the midpoint of the long axis of the cell. The chain is Cell division topological specificity factor from Bordetella avium (strain 197N).